We begin with the raw amino-acid sequence, 119 residues long: Holo-[acyl-carrier-protein] synthase (119 aa).

The Mg(2+) site is built by aspartate 8 and glutamate 58.

The protein belongs to the P-Pant transferase superfamily. AcpS family. Mg(2+) serves as cofactor.

It is found in the cytoplasm. The catalysed reaction is apo-[ACP] + CoA = holo-[ACP] + adenosine 3',5'-bisphosphate + H(+). Transfers the 4'-phosphopantetheine moiety from coenzyme A to a Ser of acyl-carrier-protein. The sequence is that of Holo-[acyl-carrier-protein] synthase from Geobacillus sp. (strain WCH70).